The primary structure comprises 644 residues: Threonine--tRNA ligase (644 aa).

Residues 1–61 (MVAITLPDGS…AHDAKVEIVT (61 aa)) form the TGS domain. Positions 242-533 (DHRKIGKALN…LIENYAGWMP (292 aa)) are catalytic. Zn(2+) is bound by residues cysteine 333, histidine 384, and histidine 510.

The protein belongs to the class-II aminoacyl-tRNA synthetase family. Homodimer. The cofactor is Zn(2+).

Its subcellular location is the cytoplasm. The enzyme catalyses tRNA(Thr) + L-threonine + ATP = L-threonyl-tRNA(Thr) + AMP + diphosphate + H(+). In terms of biological role, catalyzes the attachment of threonine to tRNA(Thr) in a two-step reaction: L-threonine is first activated by ATP to form Thr-AMP and then transferred to the acceptor end of tRNA(Thr). Also edits incorrectly charged L-seryl-tRNA(Thr). The protein is Threonine--tRNA ligase of Psychrobacter cryohalolentis (strain ATCC BAA-1226 / DSM 17306 / VKM B-2378 / K5).